A 270-amino-acid chain; its full sequence is Tubulin-specific chaperone B (270 aa).

One can recognise a CAP-Gly domain in the interval glycine 214–lysine 256.

The protein belongs to the TBCB family. As to quaternary structure, supercomplex made of cofactors A to E. Cofactors A and D function by capturing and stabilizing tubulin in a quasi-native conformation. Cofactor E binds to the cofactor D-tubulin complex; interaction with cofactor C then causes the release of tubulin polypeptides that are committed to the native state.

The protein resides in the cytoplasm. Its subcellular location is the cytoskeleton. In terms of biological role, binds to alpha-tubulin folding intermediates after their interaction with cytosolic chaperonin in the pathway leading from newly synthesized tubulin to properly folded heterodimer. The chain is Tubulin-specific chaperone B (tbcb) from Dictyostelium discoideum (Social amoeba).